Consider the following 320-residue polypeptide: HPr kinase/phosphorylase (320 aa).

Residues His139 and Lys160 contribute to the active site. Residue 154-161 participates in ATP binding; that stretch reads GDSGVGKS. Position 161 (Ser161) interacts with Mg(2+). The active-site Proton acceptor; for phosphorylation activity. Proton donor; for dephosphorylation activity is Asp178. The important for the catalytic mechanism of both phosphorylation and dephosphorylation stretch occupies residues 202 to 211; the sequence is MEIRGIGIID. Glu203 is a binding site for Mg(2+). The active site involves Arg244. An important for the catalytic mechanism of dephosphorylation region spans residues 265–270; sequence PVKTGR.

This sequence belongs to the HPrK/P family. In terms of assembly, homohexamer. Mg(2+) serves as cofactor.

It catalyses the reaction [HPr protein]-L-serine + ATP = [HPr protein]-O-phospho-L-serine + ADP + H(+). The catalysed reaction is [HPr protein]-O-phospho-L-serine + phosphate + H(+) = [HPr protein]-L-serine + diphosphate. In terms of biological role, catalyzes the ATP- as well as the pyrophosphate-dependent phosphorylation of a specific serine residue in HPr, a phosphocarrier protein of the phosphoenolpyruvate-dependent sugar phosphotransferase system (PTS). HprK/P also catalyzes the pyrophosphate-producing, inorganic phosphate-dependent dephosphorylation (phosphorolysis) of seryl-phosphorylated HPr (P-Ser-HPr). The two antagonistic activities of HprK/P are regulated by several intracellular metabolites, which change their concentration in response to the absence or presence of rapidly metabolisable carbon sources (glucose, fructose, etc.) in the growth medium. Therefore, by controlling the phosphorylation state of HPr, HPrK/P is a sensor enzyme that plays a major role in the regulation of carbon metabolism and sugar transport: it mediates carbon catabolite repression (CCR), and regulates PTS-catalyzed carbohydrate uptake and inducer exclusion. This chain is HPr kinase/phosphorylase, found in Limosilactobacillus reuteri (strain DSM 20016) (Lactobacillus reuteri).